We begin with the raw amino-acid sequence, 405 residues long: Tryptophan synthase beta chain (405 aa).

K98 carries the post-translational modification N6-(pyridoxal phosphate)lysine.

The protein belongs to the TrpB family. In terms of assembly, tetramer of two alpha and two beta chains. It depends on pyridoxal 5'-phosphate as a cofactor.

It catalyses the reaction (1S,2R)-1-C-(indol-3-yl)glycerol 3-phosphate + L-serine = D-glyceraldehyde 3-phosphate + L-tryptophan + H2O. It participates in amino-acid biosynthesis; L-tryptophan biosynthesis; L-tryptophan from chorismate: step 5/5. The beta subunit is responsible for the synthesis of L-tryptophan from indole and L-serine. The chain is Tryptophan synthase beta chain from Xylella fastidiosa (strain M12).